Consider the following 158-residue polypeptide: SsrA-binding protein (158 aa).

It belongs to the SmpB family.

The protein resides in the cytoplasm. In terms of biological role, required for rescue of stalled ribosomes mediated by trans-translation. Binds to transfer-messenger RNA (tmRNA), required for stable association of tmRNA with ribosomes. tmRNA and SmpB together mimic tRNA shape, replacing the anticodon stem-loop with SmpB. tmRNA is encoded by the ssrA gene; the 2 termini fold to resemble tRNA(Ala) and it encodes a 'tag peptide', a short internal open reading frame. During trans-translation Ala-aminoacylated tmRNA acts like a tRNA, entering the A-site of stalled ribosomes, displacing the stalled mRNA. The ribosome then switches to translate the ORF on the tmRNA; the nascent peptide is terminated with the 'tag peptide' encoded by the tmRNA and targeted for degradation. The ribosome is freed to recommence translation, which seems to be the essential function of trans-translation. The sequence is that of SsrA-binding protein from Saccharopolyspora erythraea (strain ATCC 11635 / DSM 40517 / JCM 4748 / NBRC 13426 / NCIMB 8594 / NRRL 2338).